The primary structure comprises 1196 residues: Chromosome partition protein Smc (1196 aa).

32–39 provides a ligand contact to ATP; sequence PNGSGKSN. Coiled-coil stretches lie at residues 168–288 and 327–497; these read LKHR…SVQQ and DALE…LERK. The SMC hinge domain maps to 510 to 621; that stretch reads AGILGPMAKL…VDDLDRALAL (112 aa). Coiled-coil stretches lie at residues 654–829 and 972–1026; these read LEVT…RAQQ and DRPT…KDLL.

This sequence belongs to the SMC family. Homodimer.

It is found in the cytoplasm. Required for chromosome condensation and partitioning. The sequence is that of Chromosome partition protein Smc from Mycolicibacterium paratuberculosis (strain ATCC BAA-968 / K-10) (Mycobacterium paratuberculosis).